The following is a 126-amino-acid chain: Glycine--tRNA ligase beta subunit (126 aa).

Belongs to the class-II aminoacyl-tRNA synthetase family. Tetramer of two alpha and two beta subunits.

Its subcellular location is the cytoplasm. The enzyme catalyses tRNA(Gly) + glycine + ATP = glycyl-tRNA(Gly) + AMP + diphosphate. This is Glycine--tRNA ligase beta subunit (glyS) from Neisseria gonorrhoeae.